The chain runs to 353 residues: Sulfate/thiosulfate import ATP-binding protein CysA (353 aa).

The 235-residue stretch at 3–237 folds into the ABC transporter domain; the sequence is IQVKNIEKHF…PATPFVFDFL (235 aa). 35 to 42 contributes to the ATP binding site; sequence GPSGCGKT.

Belongs to the ABC transporter superfamily. Sulfate/tungstate importer (TC 3.A.1.6) family. The complex is composed of two ATP-binding proteins (CysA), two transmembrane proteins (CysT and CysW) and a solute-binding protein (CysP).

It is found in the cell inner membrane. The enzyme catalyses sulfate(out) + ATP + H2O = sulfate(in) + ADP + phosphate + H(+). The catalysed reaction is thiosulfate(out) + ATP + H2O = thiosulfate(in) + ADP + phosphate + H(+). Its function is as follows. Part of the ABC transporter complex CysAWTP involved in sulfate/thiosulfate import. Responsible for energy coupling to the transport system. The protein is Sulfate/thiosulfate import ATP-binding protein CysA of Acinetobacter baylyi (strain ATCC 33305 / BD413 / ADP1).